The sequence spans 580 residues: N(6)-adenosine-methyltransferase catalytic subunit METTL3 (580 aa).

The segment at M1 to P70 is disordered. The residue at position 2 (S2) is an N-acetylserine; alternate. S2 carries the post-translational modification Phosphoserine; alternate. A compositionally biased stretch (basic and acidic residues) spans Q28–N37. S43, S48, and S50 each carry phosphoserine. Glycyl lysine isopeptide (Lys-Gly) (interchain with G-Cter in SUMO1) cross-links involve residues K177, K211, K212, and K215. The interval L198–S219 is disordered. The Nuclear localization signal signature appears at A210–K215. Residues S219 and S243 each carry the phosphoserine modification. Position 348 is a phosphothreonine (T348). S350 bears the Phosphoserine mark. S-adenosyl-L-methionine is bound by residues D377–I378 and D395. A gate loop 1 region spans residues P396–T410. Interaction with METTL14 stretches follow at residues E450–E454 and Q464–K480. The interval Q462–G479 is interphase loop. The tract at residues R465–H478 is positively charged region required for RNA-binding. A gate loop 2 region spans residues V507–D515. Residues K513, R536–N539, and N549–Q550 each bind S-adenosyl-L-methionine.

It belongs to the MT-A70-like family. As to quaternary structure, heterodimer; heterodimerizes with METTL14 to form an antiparallel heterodimer that constitutes an active methyltransferase. Component of the WMM complex, a N6-methyltransferase complex composed of a catalytic subcomplex, named MAC, and of an associated subcomplex, named MACOM. The MAC subcomplex is composed of METTL3 and METTL14. The MACOM subcomplex is composed of WTAP, ZC3H13, CBLL1/HAKAI, VIRMA, and, in some cases of RBM15 (RBM15 or RBM15B). Interacts with NCBP1/CBP80. Interacts with EIF4E. Interacts with EIF3B. In terms of processing, sumoylation inhibits the N6-adenosine-methyltransferase activity. Sumoylation does not affect subcellular location or interaction with METTL14. Desumoylated by SENP1. As to expression, widely expressed at low level. Expressed in spleen, thymus, prostate, testis, ovary, small intestine, colon and peripheral blood leukocytes.

The protein localises to the nucleus. It localises to the nucleus speckle. It is found in the cytoplasm. The enzyme catalyses an adenosine in mRNA + S-adenosyl-L-methionine = an N(6)-methyladenosine in mRNA + S-adenosyl-L-homocysteine + H(+). Its activity is regulated as follows. Methyltransferase activity is regulated by miRNAs via a sequence pairing mechanism. Methyltransferase activity is inhibited by sumoylation. The METTL3-METTL14 heterodimer forms a N6-methyltransferase complex that methylates adenosine residues at the N(6) position of some RNAs and regulates various processes such as the circadian clock, differentiation of embryonic and hematopoietic stem cells, cortical neurogenesis, response to DNA damage, differentiation of T-cells and primary miRNA processing. In the heterodimer formed with METTL14, METTL3 constitutes the catalytic core. N6-methyladenosine (m6A), which takes place at the 5'-[AG]GAC-3' consensus sites of some mRNAs, plays a role in mRNA stability, processing, translation efficiency and editing. M6A acts as a key regulator of mRNA stability: methylation is completed upon the release of mRNA into the nucleoplasm and promotes mRNA destabilization and degradation. In embryonic stem cells (ESCs), m6A methylation of mRNAs encoding key naive pluripotency-promoting transcripts results in transcript destabilization, promoting differentiation of ESCs. M6A regulates the length of the circadian clock: acts as an early pace-setter in the circadian loop by putting mRNA production on a fast-track for facilitating nuclear processing, thereby providing an early point of control in setting the dynamics of the feedback loop. M6A also regulates circadian regulation of hepatic lipid metabolism. M6A regulates spermatogonial differentiation and meiosis and is essential for male fertility and spermatogenesis. Also required for oogenesis. Involved in the response to DNA damage: in response to ultraviolet irradiation, METTL3 rapidly catalyzes the formation of m6A on poly(A) transcripts at DNA damage sites, leading to the recruitment of POLK to DNA damage sites. M6A is also required for T-cell homeostasis and differentiation: m6A methylation of transcripts of SOCS family members (SOCS1, SOCS3 and CISH) in naive T-cells promotes mRNA destabilization and degradation, promoting T-cell differentiation. Inhibits the type I interferon response by mediating m6A methylation of IFNB. M6A also takes place in other RNA molecules, such as primary miRNA (pri-miRNAs). Mediates m6A methylation of Xist RNA, thereby participating in random X inactivation: m6A methylation of Xist leads to target YTHDC1 reader on Xist and promote transcription repression activity of Xist. M6A also regulates cortical neurogenesis: m6A methylation of transcripts related to transcription factors, neural stem cells, the cell cycle and neuronal differentiation during brain development promotes their destabilization and decay, promoting differentiation of radial glial cells. METTL3 mediates methylation of pri-miRNAs, marking them for recognition and processing by DGCR8. Acts as a positive regulator of mRNA translation independently of the methyltransferase activity: promotes translation by interacting with the translation initiation machinery in the cytoplasm. Its overexpression in a number of cancer cells suggests that it may participate in cancer cell proliferation by promoting mRNA translation. During human coronavirus SARS-CoV-2 infection, adds m6A modifications in SARS-CoV-2 RNA leading to decreased RIGI binding and subsequently dampening the sensing and activation of innate immune responses. The protein is N(6)-adenosine-methyltransferase catalytic subunit METTL3 of Homo sapiens (Human).